Reading from the N-terminus, the 913-residue chain is DNA polymerase (913 aa).

Residues Pro-182–Pro-401 are contains conserved residues essential for 3' -&gt; 5' exonuclease activities.

Belongs to the DNA polymerase type-B family.

The enzyme catalyses DNA(n) + a 2'-deoxyribonucleoside 5'-triphosphate = DNA(n+1) + diphosphate. In addition to polymerase activity, this DNA polymerase potentially exhibits 3' to 5' exonuclease activity. This is DNA polymerase (DPO) from Chlorella (PBCV-NY2A).